Consider the following 130-residue polypeptide: Small ribosomal subunit protein uS8 (130 aa).

Belongs to the universal ribosomal protein uS8 family. Part of the 30S ribosomal subunit. Contacts proteins S5 and S12.

Its function is as follows. One of the primary rRNA binding proteins, it binds directly to 16S rRNA central domain where it helps coordinate assembly of the platform of the 30S subunit. The chain is Small ribosomal subunit protein uS8 from Cronobacter sakazakii (strain ATCC BAA-894) (Enterobacter sakazakii).